The sequence spans 568 residues: MEPLQQQQQQQQQKQPQQPLLQMDAREKQGPQTRESQFLYASKLGTQPALLSITPGRPSGSSVLGPLARVPPATPVARMSEQSNVNSEPEEEEGGLEDEDGDDDVAEVAEKEAQAASKYFHMQKVTRQEPRATPMSSLLPVPGLSPQGQQTKEDHTKDASKAPPSVPTAGQPSWSLDEQLKQNGALAWSDDADGGRGREISRDFAKLYELDGDPERKEFLDDLFIFMQKRGTPINRIPIMAKQILDLYMLYKLVTEKGGLVEIINKKIWREITKGLNLPTSITSAAFTLRTQYMKYLYAYECEKKALSSPAELQAAIDGNRREGRRPSYSSSLFGYSPAAAAAAAAAAAAAAASAASAGTPALLSSPKIRFSILGLGSSSGTSASSPRIPPASTLRKGDGVPVPVPNRLAVSGTLAGQQAGNRPGPLEHLRERLESGEPPEKKASRLSEEEQRLVQQAFQRNLFSMARQLPMKIRINGREDRAEPSAPALNLTTSNIGSINMSVDIDGTTYTGVLFAQKPVVHLIAGSTPQSIGSSASSSNSSSSHCSPSPTSSRGTPSAEPSTSWSL.

N-acetylmethionine is present on Met-1. Residues 1–22 (MEPLQQQQQQQQQKQPQQPLLQ) are compositionally biased toward low complexity. Residues 1–174 (MEPLQQQQQQ…SVPTAGQPSW (174 aa)) form a disordered region. Ser-87 carries the post-translational modification Phosphoserine. The segment covering 88-107 (EPEEEEGGLEDEDGDDDVAE) has biased composition (acidic residues). Residues 151-160 (TKEDHTKDAS) show a composition bias toward basic and acidic residues. The segment at 201-374 (SRDFAKLYEL…SSPKIRFSIL (174 aa)) is interaction with RB1. Residues 213–305 (DPERKEFLDD…YLYAYECEKK (93 aa)) form the ARID domain. At Ser-309 the chain carries Phosphoserine. Position 370 is an asymmetric dimethylarginine (Arg-370). Residues 378 to 403 (SSSGTSASSPRIPPASTLRKGDGVPV) are disordered. The region spanning 425–522 (GPLEHLRERL…GVLFAQKPVV (98 aa)) is the REKLES domain. The interval 495–518 (SNIGSINMSVDIDGTTYTGVLFAQ) is interaction with ARID3A. A compositionally biased stretch (low complexity) spans 529-559 (TPQSIGSSASSSNSSSSHCSPSPTSSRGTPS). The disordered stretch occupies residues 529–568 (TPQSIGSSASSSNSSSSHCSPSPTSSRGTPSAEPSTSWSL).

Heterodimer with ARID3A. Interacts with unphosphorylated RB1. As to expression, expressed at high levels in testis. Also expressed in prostate, thyroid and thymus.

The protein localises to the nucleus. Its function is as follows. Transcription factor involved in the production of cranial mesenchymal tissues. Favors nuclear targeting of ARID3A. The chain is AT-rich interactive domain-containing protein 3B (Arid3b) from Mus musculus (Mouse).